The following is a 693-amino-acid chain: E3 ubiquitin-protein ligase MARCHF7 (693 aa).

Methionine 1 carries the post-translational modification N-acetylmethionine. Disordered stretches follow at residues 1-43 (MESK…RDSS), 69-136 (ESEI…LGSF), 158-281 (LMDY…RRTT), 296-342 (FFSR…EGRA), 361-430 (LSQN…RDSN), 445-475 (AANR…RNPG), and 512-533 (WNST…PEKL). 5 stretches are compositionally biased toward polar residues: residues 14-36 (VQPS…LNDS), 95-105 (SCTNCASTSAG), 112-132 (LNTV…SSMV), 167-184 (DFTT…SYSQ), and 192-215 (AVST…QTVP). The span at 216–234 (SSRDSSRSSFRSHFSPRQS) shows a compositional bias: low complexity. Residues 236–267 (SFRNSSHPAFSYFSSRNETPTISNSERGSSQR) are compositionally biased toward polar residues. Positions 268–279 (PYRESSDNEGRR) are enriched in basic and acidic residues. The segment covering 296 to 305 (FFSRRSSQDS) has biased composition (low complexity). The span at 306–323 (LNTRSLSSENYISPRTLT) shows a compositional bias: polar residues. Residue serine 318 is modified to Phosphoserine. The segment covering 324 to 337 (SQSRNNGTSSSSDV) has biased composition (low complexity). The residue at position 390 (serine 390) is a Phosphoserine. Residues 451–463 (ASGASSSAAAGGS) are compositionally biased toward low complexity. The span at 517-533 (GKNDKAKSAPSRDPEKL) shows a compositional bias: basic and acidic residues. Residues 546 to 616 (DDEEEGDLCR…ELCKEKLQLN (71 aa)) form an RING-CH-type zinc finger. Zn(2+) is bound by residues cysteine 554, cysteine 557, cysteine 572, cysteine 574, histidine 582, cysteine 585, cysteine 606, and cysteine 609. Residue threonine 688 is modified to Phosphothreonine. Serine 689 is subject to Phosphoserine.

Expressed in brain, thymus, muscle and kidney.

It is found in the cytoplasm. It carries out the reaction S-ubiquitinyl-[E2 ubiquitin-conjugating enzyme]-L-cysteine + [acceptor protein]-L-lysine = [E2 ubiquitin-conjugating enzyme]-L-cysteine + N(6)-ubiquitinyl-[acceptor protein]-L-lysine.. Its pathway is protein modification; protein ubiquitination. Its function is as follows. E3 ubiquitin-protein ligase which may specifically enhance the E2 activity of HIP2. E3 ubiquitin ligases accept ubiquitin from an E2 ubiquitin-conjugating enzyme in the form of a thioester and then directly transfer the ubiquitin to targeted substrates. May be involved in T-cell proliferation by regulating LIF secretion. May play a role in lysosome homeostasis. Promotes 'Lys-6', 'Lys-11' and 'Lys-63'-linked mixed polyubiquitination on ATG14 leading to the inhibition of autophagy by impairing the interaction between ATG14 and STX7. Participates in the dopamine-mediated negative regulation of the NLRP3 inflammasome by promoting its uibiquitination and subsequent degradation. This is E3 ubiquitin-protein ligase MARCHF7 (Marchf7) from Mus musculus (Mouse).